A 92-amino-acid chain; its full sequence is Small ribosomal subunit protein bS20 (92 aa).

The tract at residues Met-1 to Ser-23 is disordered. The span at Ala-7–His-20 shows a compositional bias: basic residues.

The protein belongs to the bacterial ribosomal protein bS20 family.

Functionally, binds directly to 16S ribosomal RNA. The sequence is that of Small ribosomal subunit protein bS20 from Pseudomonas savastanoi pv. phaseolicola (strain 1448A / Race 6) (Pseudomonas syringae pv. phaseolicola (strain 1448A / Race 6)).